A 155-amino-acid chain; its full sequence is Small ribosomal subunit protein uS7 (155 aa).

This sequence belongs to the universal ribosomal protein uS7 family. In terms of assembly, part of the 30S ribosomal subunit. Contacts proteins S9 and S11.

Its function is as follows. One of the primary rRNA binding proteins, it binds directly to 16S rRNA where it nucleates assembly of the head domain of the 30S subunit. Is located at the subunit interface close to the decoding center, probably blocks exit of the E-site tRNA. This Mycoplasma pneumoniae (strain ATCC 29342 / M129 / Subtype 1) (Mycoplasmoides pneumoniae) protein is Small ribosomal subunit protein uS7.